A 140-amino-acid polypeptide reads, in one-letter code: Large-conductance mechanosensitive channel 2 (140 aa).

Transmembrane regions (helical) follow at residues 8–28 (FISKGNVMDLAVGVIIGAAFG), 30–50 (IVDSLVNDIIMPVIGAIFGGL), and 81–101 (GSFITVALNFVILAFIIFLMV).

The protein belongs to the MscL family. Homopentamer.

The protein localises to the cell inner membrane. Channel that opens in response to stretch forces in the membrane lipid bilayer. May participate in the regulation of osmotic pressure changes within the cell. The polypeptide is Large-conductance mechanosensitive channel 2 (Mesorhizobium japonicum (strain LMG 29417 / CECT 9101 / MAFF 303099) (Mesorhizobium loti (strain MAFF 303099))).